Here is a 1136-residue protein sequence, read N- to C-terminus: Unconventional myosin-Ib (1136 aa).

Residues 15–701 form the Myosin motor domain; it reads IGVGDTVLLE…TLFQLEDLRK (687 aa). Position 60 is a phosphoserine (serine 60). 108–115 contributes to the ATP binding site; the sequence is GESGAGKT. A Glycyl lysine isopeptide (Lys-Gly) (interchain with G-Cter in SUMO1); alternate cross-link involves residue lysine 287. Residue lysine 287 forms a Glycyl lysine isopeptide (Lys-Gly) (interchain with G-Cter in SUMO2); alternate linkage. The segment at 592-599 is actin-binding; sequence YIRCIKPN. IQ domains are found at residues 704–729, 730–750, 750–778, 780–807, 808–837, and 837–866; these read LEDLATLIQKIYRGWKCRTHFLLMKR, SQVVIAAWYRRYAQQKRYQQI, IKSSALVIQSYIRGWKARKILRELKHQKR, KEAATTIAAYWHGTQARKERRRLKDEAR, NKHAIAVIWAFWLGSKARRELKRLKEEARR, and RKHAVAVIWAYWLGLKVRREYRKFFRANAG. The TH1 domain occupies 952–1136; sequence KALYPSSVGQ…NNRLLEVAVP (185 aa).

The protein belongs to the TRAFAC class myosin-kinesin ATPase superfamily. Myosin family.

Its function is as follows. Motor protein that may participate in process critical to neuronal development and function such as cell migration, neurite outgrowth and vesicular transport. The sequence is that of Unconventional myosin-Ib (Myo1b) from Rattus norvegicus (Rat).